Consider the following 443-residue polypeptide: Amino-acid acetyltransferase (443 aa).

Residues 296–443 form the N-acetyltransferase domain; the sequence is EQIRRATIND…KSKVLMADLG (148 aa).

The protein belongs to the acetyltransferase family. ArgA subfamily. In terms of assembly, homohexamer.

The protein resides in the cytoplasm. It catalyses the reaction L-glutamate + acetyl-CoA = N-acetyl-L-glutamate + CoA + H(+). Its pathway is amino-acid biosynthesis; L-arginine biosynthesis; N(2)-acetyl-L-ornithine from L-glutamate: step 1/4. In Escherichia coli O157:H7, this protein is Amino-acid acetyltransferase (argA).